Consider the following 230-residue polypeptide: UPF0173 metal-dependent hydrolase RHOS4_08540 (230 aa).

It belongs to the UPF0173 family.

The sequence is that of UPF0173 metal-dependent hydrolase RHOS4_08540 from Cereibacter sphaeroides (strain ATCC 17023 / DSM 158 / JCM 6121 / CCUG 31486 / LMG 2827 / NBRC 12203 / NCIMB 8253 / ATH 2.4.1.) (Rhodobacter sphaeroides).